Consider the following 74-residue polypeptide: Translation initiation factor IF-1 (74 aa).

The region spanning 1–72 (MSKEDAIEME…NKGRITYRLK (72 aa)) is the S1-like domain.

This sequence belongs to the IF-1 family. In terms of assembly, component of the 30S ribosomal translation pre-initiation complex which assembles on the 30S ribosome in the order IF-2 and IF-3, IF-1 and N-formylmethionyl-tRNA(fMet); mRNA recruitment can occur at any time during PIC assembly.

The protein localises to the cytoplasm. Functionally, one of the essential components for the initiation of protein synthesis. Stabilizes the binding of IF-2 and IF-3 on the 30S subunit to which N-formylmethionyl-tRNA(fMet) subsequently binds. Helps modulate mRNA selection, yielding the 30S pre-initiation complex (PIC). Upon addition of the 50S ribosomal subunit IF-1, IF-2 and IF-3 are released leaving the mature 70S translation initiation complex. The sequence is that of Translation initiation factor IF-1 from Synechococcus sp. (strain JA-2-3B'a(2-13)) (Cyanobacteria bacterium Yellowstone B-Prime).